The chain runs to 517 residues: GMP synthase [glutamine-hydrolyzing] (517 aa).

The region spanning 11 to 202 (KIIVLDFGSQ…AFDVCEAKAN (192 aa)) is the Glutamine amidotransferase type-1 domain. The Nucleophile role is filled by cysteine 88. Active-site residues include histidine 176 and glutamate 178. Residues 203–392 (WSMNDFIDMQ…LGMPEDLVWR (190 aa)) enclose the GMPS ATP-PPase domain. 230 to 236 (SGGVDSS) serves as a coordination point for ATP.

In terms of assembly, homodimer.

It catalyses the reaction XMP + L-glutamine + ATP + H2O = GMP + L-glutamate + AMP + diphosphate + 2 H(+). It functions in the pathway purine metabolism; GMP biosynthesis; GMP from XMP (L-Gln route): step 1/1. In terms of biological role, catalyzes the synthesis of GMP from XMP. This Pediococcus pentosaceus (strain ATCC 25745 / CCUG 21536 / LMG 10740 / 183-1w) protein is GMP synthase [glutamine-hydrolyzing].